Consider the following 147-residue polypeptide: MTTDIIKTILLVIVIIAAAAVGLIKGDFFSADQKTSQTKEYDETMAFPSDRYPETAKHIKDAINEGHSEVCTIDRDGAEERREQSLKDVPSKKGYDRDEWPMAMCKEGGEGASVEYISPADNRGAGSWVGHRLTDYPDGTKVLFTIQ.

The chain crosses the membrane as a helical span at residues 8–24; it reads TILLVIVIIAAAAVGLI. Positions 75 to 100 are disordered; it reads RDGAEERREQSLKDVPSKKGYDRDEW.

This sequence to B.subtilis NucB. This protein is a subunit of a 75 kDa protein complex, which governs binding and entry of donor DNA. The complex is a tetramer of two subunits of the DNA-entry nuclease and two subunits of a competence-specific protein. Only the complex is able to bind ds- and ss-DNA. It depends on Mn(2+) as a cofactor.

It localises to the cell membrane. Its activity is regulated as follows. The activity can be inhibited by the 18 kDa competence-specific protein nin. By degrading DNA that enters the cell, plays a role in the competence of cells to be transformed. Degrades both double-stranded, linear and covalently closed circular DNA. The polypeptide is DNA-entry nuclease (nucA) (Bacillus subtilis (strain 168)).